The sequence spans 439 residues: 2-(3-amino-3-carboxypropyl)histidine synthase subunit 1 (439 aa).

Positions S11–K54 are disordered. Residues S44–K54 are compositionally biased toward polar residues. The [4Fe-4S] cluster site is built by C147, C251, and C380.

It belongs to the DPH1/DPH2 family. DPH1 subfamily. In terms of assembly, component of the 2-(3-amino-3-carboxypropyl)histidine synthase complex composed of DPH1, DPH2, DPH3 and a NADH-dependent reductase, predominantly CBR1. It depends on [4Fe-4S] cluster as a cofactor.

It is found in the cytoplasm. The enzyme catalyses L-histidyl-[translation elongation factor 2] + S-adenosyl-L-methionine = 2-[(3S)-amino-3-carboxypropyl]-L-histidyl-[translation elongation factor 2] + S-methyl-5'-thioadenosine + H(+). The protein operates within protein modification; peptidyl-diphthamide biosynthesis. Its function is as follows. Catalyzes the first step of diphthamide biosynthesis, a post-translational modification of histidine which occurs in elongation factor 2. DPH1 and DPH2 transfer a 3-amino-3-carboxypropyl (ACP) group from S-adenosyl-L-methionine (SAM) to a histidine residue, the reaction is assisted by a reduction system comprising DPH3 and a NADH-dependent reductase, predominantly CBR1. The polypeptide is 2-(3-amino-3-carboxypropyl)histidine synthase subunit 1 (DPH1) (Yarrowia lipolytica (strain CLIB 122 / E 150) (Yeast)).